Here is a 69-residue protein sequence, read N- to C-terminus: Probable rubredoxin HupI (69 aa).

The Rubredoxin-like domain maps to 16–67; that stretch reads VTRLECGICWTVYDPADGDDVAQIAPGTPFAALPEEWHCPNCDAPKSKFMAI. Residues Cys21, Cys24, Cys54, and Cys57 each coordinate Fe cation.

Belongs to the rubredoxin family. The cofactor is Fe(3+).

Could be an electron transport intermediate in hydrogen oxidation. The sequence is that of Probable rubredoxin HupI (hupI) from Bradyrhizobium diazoefficiens (strain JCM 10833 / BCRC 13528 / IAM 13628 / NBRC 14792 / USDA 110).